A 166-amino-acid chain; its full sequence is NADH-quinone oxidoreductase subunit B (166 aa).

Positions 44, 45, 110, and 140 each coordinate [4Fe-4S] cluster.

This sequence belongs to the complex I 20 kDa subunit family. NDH-1 is composed of 14 different subunits. Subunits NuoB, C, D, E, F, and G constitute the peripheral sector of the complex. Requires [4Fe-4S] cluster as cofactor.

The protein resides in the cell membrane. It catalyses the reaction a quinone + NADH + 5 H(+)(in) = a quinol + NAD(+) + 4 H(+)(out). In terms of biological role, NDH-1 shuttles electrons from NADH, via FMN and iron-sulfur (Fe-S) centers, to quinones in the respiratory chain. The immediate electron acceptor for the enzyme in this species is believed to be a menaquinone. Couples the redox reaction to proton translocation (for every two electrons transferred, four hydrogen ions are translocated across the cytoplasmic membrane), and thus conserves the redox energy in a proton gradient. The chain is NADH-quinone oxidoreductase subunit B from Carboxydothermus hydrogenoformans (strain ATCC BAA-161 / DSM 6008 / Z-2901).